A 647-amino-acid chain; its full sequence is Putative lipase YDL109C (647 aa).

Serine 274 acts as the Charge relay system in catalysis. Residues 502 to 523 are disordered; sequence PPPSPTLYEGTAAKEGETRKTR. The span at 513–523 shows a compositional bias: basic and acidic residues; sequence AAKEGETRKTR.

It belongs to the putative lipase ROG1 family.

Its function is as follows. Involved in lipid metabolism. This is Putative lipase YDL109C from Saccharomyces cerevisiae (strain ATCC 204508 / S288c) (Baker's yeast).